We begin with the raw amino-acid sequence, 353 residues long: 3-dehydroquinate synthase (353 aa).

Residues 62–67, 96–100, 120–121, Lys-133, and Lys-142 contribute to the NAD(+) site; these read DGEQYK, GVIGD, and TT. Residues Glu-175, His-236, and His-253 each coordinate Zn(2+).

Belongs to the sugar phosphate cyclases superfamily. Dehydroquinate synthase family. It depends on NAD(+) as a cofactor. Co(2+) is required as a cofactor. The cofactor is Zn(2+).

Its subcellular location is the cytoplasm. The enzyme catalyses 7-phospho-2-dehydro-3-deoxy-D-arabino-heptonate = 3-dehydroquinate + phosphate. It functions in the pathway metabolic intermediate biosynthesis; chorismate biosynthesis; chorismate from D-erythrose 4-phosphate and phosphoenolpyruvate: step 2/7. Functionally, catalyzes the conversion of 3-deoxy-D-arabino-heptulosonate 7-phosphate (DAHP) to dehydroquinate (DHQ). This chain is 3-dehydroquinate synthase, found in Helicobacter hepaticus (strain ATCC 51449 / 3B1).